Here is a 568-residue protein sequence, read N- to C-terminus: Methyl-accepting chemotaxis protein CtpH (568 aa).

Residues 1-39 (MPASPGHRDVLGCLVAACVPVQPGNPSRRSMLQQSLRAQ) are Cytoplasmic-facing. A helical membrane pass occupies residues 40–60 (ILVLLGGSLAALLLIALACFG). The Periplasmic segment spans residues 61-216 (SLTGDVRAYR…ISAEARRTML (156 aa)). A helical membrane pass occupies residues 217-237 (LGSLVLIGASLAVALLSLWLV). The Cytoplasmic portion of the chain corresponds to 238–568 (NRNLVRPVQR…LGDALQRLRA (331 aa)). In terms of domain architecture, HAMP spans 239–291 (RNLVRPVQRLIEHIAQLSHGDFGERIEIRRKDELGKLALAANTLRDFLVDIFD). One can recognise a Methyl-accepting transducer domain in the interval 296–532 (STRDLDSASG…EISRNLTEIA (237 aa)).

Belongs to the methyl-accepting chemotaxis (MCP) protein family.

Its subcellular location is the cell inner membrane. Chemotactic-signal transducers respond to changes in the concentration of attractants and repellents in the environment, transduce a signal from the outside to the inside of the cell, and facilitate sensory adaptation through the variation of the level of methylation. Chemoreceptor for inorganic phosphate, which is required for taxis at high concentrations of phosphate. Recognizes inorganic phosphate directly. Can also bind to other components that have a pyrophosphate group, including ATP and ADP. This is Methyl-accepting chemotaxis protein CtpH from Pseudomonas aeruginosa (strain ATCC 15692 / DSM 22644 / CIP 104116 / JCM 14847 / LMG 12228 / 1C / PRS 101 / PAO1).